The chain runs to 802 residues: Ribosome-releasing factor 2, mitochondrial (802 aa).

Positions 13 to 297 constitute a tr-type G domain; the sequence is KKIRNIGIIA…AVVDFLPSPA (285 aa). GTP contacts are provided by residues 22 to 29, 86 to 90, and 140 to 143; these read AHIDAGKT, DTPGH, and NKMD.

The protein belongs to the TRAFAC class translation factor GTPase superfamily. Classic translation factor GTPase family. EF-G/EF-2 subfamily.

It is found in the mitochondrion. Its function is as follows. Mitochondrial GTPase that mediates the disassembly of ribosomes from messenger RNA at the termination of mitochondrial protein biosynthesis. Not involved in the GTP-dependent ribosomal translocation step during translation elongation. This Yarrowia lipolytica (strain CLIB 122 / E 150) (Yeast) protein is Ribosome-releasing factor 2, mitochondrial.